The chain runs to 206 residues: Probable peptidyl-tRNA hydrolase (206 aa).

Histidine 48 acts as the Proton acceptor in catalysis. TRNA contacts are provided by tyrosine 83, asparagine 85, and asparagine 137.

The protein belongs to the PTH family.

The protein resides in the mitochondrion. It carries out the reaction an N-acyl-L-alpha-aminoacyl-tRNA + H2O = an N-acyl-L-amino acid + a tRNA + H(+). Functionally, peptidyl-tRNA hydrolase involved in the recycling of tRNA-Lys from diacetyl-lysyl-tRNA-Lys and is important for mitochondrial function. In Schizosaccharomyces pombe (strain 972 / ATCC 24843) (Fission yeast), this protein is Probable peptidyl-tRNA hydrolase (pth1).